A 375-amino-acid polypeptide reads, in one-letter code: Queuine tRNA-ribosyltransferase (375 aa).

The Proton acceptor role is filled by Asp90. Substrate contacts are provided by residues 90–94, Asp144, Gln190, and Gly217; that span reads DSGGF. The segment at 248 to 254 is RNA binding; that stretch reads GIGTPHY. Residue Asp267 is the Nucleophile of the active site. Residues 272–276 form an RNA binding; important for wobble base 34 recognition region; the sequence is ARITR. Residues Cys305, Cys307, Cys310, and His336 each coordinate Zn(2+).

This sequence belongs to the queuine tRNA-ribosyltransferase family. In terms of assembly, homodimer. Within each dimer, one monomer is responsible for RNA recognition and catalysis, while the other monomer binds to the replacement base PreQ1. The cofactor is Zn(2+).

The enzyme catalyses 7-aminomethyl-7-carbaguanine + guanosine(34) in tRNA = 7-aminomethyl-7-carbaguanosine(34) in tRNA + guanine. Its pathway is tRNA modification; tRNA-queuosine biosynthesis. Functionally, catalyzes the base-exchange of a guanine (G) residue with the queuine precursor 7-aminomethyl-7-deazaguanine (PreQ1) at position 34 (anticodon wobble position) in tRNAs with GU(N) anticodons (tRNA-Asp, -Asn, -His and -Tyr). Catalysis occurs through a double-displacement mechanism. The nucleophile active site attacks the C1' of nucleotide 34 to detach the guanine base from the RNA, forming a covalent enzyme-RNA intermediate. The proton acceptor active site deprotonates the incoming PreQ1, allowing a nucleophilic attack on the C1' of the ribose to form the product. After dissociation, two additional enzymatic reactions on the tRNA convert PreQ1 to queuine (Q), resulting in the hypermodified nucleoside queuosine (7-(((4,5-cis-dihydroxy-2-cyclopenten-1-yl)amino)methyl)-7-deazaguanosine). The protein is Queuine tRNA-ribosyltransferase of Borreliella burgdorferi (strain ZS7) (Borrelia burgdorferi).